A 328-amino-acid polypeptide reads, in one-letter code: Malate dehydrogenase (328 aa).

11–17 (GAAGQIG) contributes to the NAD(+) binding site. Positions 94 and 100 each coordinate substrate. NAD(+) is bound by residues Asn107, Gln114, and 131–133 (VGN). Residues Asn133 and Arg164 each contribute to the substrate site. His189 serves as the catalytic Proton acceptor.

Belongs to the LDH/MDH superfamily. MDH type 2 family.

It catalyses the reaction (S)-malate + NAD(+) = oxaloacetate + NADH + H(+). Functionally, catalyzes the reversible oxidation of malate to oxaloacetate. The sequence is that of Malate dehydrogenase from Xanthomonas oryzae pv. oryzae (strain MAFF 311018).